The sequence spans 593 residues: Aspartate--tRNA(Asp/Asn) ligase (593 aa).

Residue Glu173 coordinates L-aspartate. The interval Gln197–Lys200 is aspartate. Arg219 provides a ligand contact to L-aspartate. ATP contacts are provided by residues Arg219 to Glu221 and Gln228. His451 contributes to the L-aspartate binding site. Glu485 lines the ATP pocket. Arg492 serves as a coordination point for L-aspartate. Gly537 to Arg540 serves as a coordination point for ATP.

It belongs to the class-II aminoacyl-tRNA synthetase family. Type 1 subfamily. In terms of assembly, homodimer.

The protein localises to the cytoplasm. It carries out the reaction tRNA(Asx) + L-aspartate + ATP = L-aspartyl-tRNA(Asx) + AMP + diphosphate. Aspartyl-tRNA synthetase with relaxed tRNA specificity since it is able to aspartylate not only its cognate tRNA(Asp) but also tRNA(Asn). Reaction proceeds in two steps: L-aspartate is first activated by ATP to form Asp-AMP and then transferred to the acceptor end of tRNA(Asp/Asn). The protein is Aspartate--tRNA(Asp/Asn) ligase of Legionella pneumophila (strain Corby).